An 83-amino-acid chain; its full sequence is Normal mucosa of esophagus-specific gene 1 protein (83 aa).

This sequence belongs to the complex I NDUFA4 subunit family. As to expression, expressed mainly in stomach, placenta, small intestine and colon, as well as in normal mucosa of esophagus. Down-regulated in esophageal squamous cell carcinoma.

It localises to the nucleus. This is Normal mucosa of esophagus-specific gene 1 protein (NMES1) from Homo sapiens (Human).